The following is an 85-amino-acid chain: Small ribosomal subunit protein bS16 (85 aa).

Belongs to the bacterial ribosomal protein bS16 family.

In Rubrobacter xylanophilus (strain DSM 9941 / JCM 11954 / NBRC 16129 / PRD-1), this protein is Small ribosomal subunit protein bS16.